Here is a 174-residue protein sequence, read N- to C-terminus: Large ribosomal subunit protein uL10 (174 aa).

The protein belongs to the universal ribosomal protein uL10 family. In terms of assembly, part of the ribosomal stalk of the 50S ribosomal subunit. The N-terminus interacts with L11 and the large rRNA to form the base of the stalk. The C-terminus forms an elongated spine to which L12 dimers bind in a sequential fashion forming a multimeric L10(L12)X complex.

Functionally, forms part of the ribosomal stalk, playing a central role in the interaction of the ribosome with GTP-bound translation factors. The protein is Large ribosomal subunit protein uL10 of Rubrobacter xylanophilus (strain DSM 9941 / JCM 11954 / NBRC 16129 / PRD-1).